A 52-amino-acid polypeptide reads, in one-letter code: MKKYGCLVCGYVYDPAKGDPDHGIAPGTAFEDLPADWVCPLCGVSKDEFEPL.

Position 1 is an N-formylmethionine; partial (Met1). The region spanning 1–52 is the Rubredoxin-like domain; that stretch reads MKKYGCLVCGYVYDPAKGDPDHGIAPGTAFEDLPADWVCPLCGVSKDEFEPL. Fe cation-binding residues include Cys6, Cys9, Cys39, and Cys42.

Belongs to the rubredoxin family. Fe(3+) is required as a cofactor. In terms of processing, observed in four forms, with and without iron, and with and without formylation at Met-1.

In terms of biological role, rubredoxin is a small nonheme, iron protein lacking acid-labile sulfide. Its single Fe, chelated to 4 Cys, functions as an electron acceptor and may also stabilize the conformation of the molecule. This chain is Rubredoxin, found in Heliobacterium mobile (Heliobacillus mobilis).